The following is a 421-amino-acid chain: Bone morphogenetic protein 10 (421 aa).

A signal peptide spans 1-21 (MGSLVLPLSAVFCLVAHSASG). A propeptide spanning residues 22–313 (SPIMGLEQSP…IDDSSARIRR (292 aa)) is cleaved from the precursor. N-linked (GlcNAc...) asparagine glycans are attached at residues Asn67 and Asn131. 3 disulfides stabilise this stretch: Cys320–Cys386, Cys349–Cys418, and Cys353–Cys420.

The protein belongs to the TGF-beta family. Homodimer; disulfide-linked. Interacts with FBN1 (via N-terminal domain) and FBN2. Interacts with ENG. As to expression, in the embryo, expressed exclusively in the ventricular trabecular myocardium of the developing heart from 9.0 dpc-13.5 dpc. By 16.5 dpc-18.5 dpc, only detectable in atria. Highly expressed in the adult heart where it is found in the right atrium but not in the left atrium. Lower levels in adult liver and lung.

It localises to the secreted. In terms of biological role, required for maintaining the proliferative activity of embryonic cardiomyocytes by preventing premature activation of the negative cell cycle regulator CDKN1C/p57KIP and maintaining the required expression levels of cardiogenic factors such as MEF2C and NKX2-5. Acts as a ligand for ACVRL1/ALK1, BMPR1A/ALK3 and BMPR1B/ALK6, leading to activation of SMAD1, SMAD5 and SMAD8 transcription factors. Inhibits endothelial cell migration and growth. May reduce cell migration and cell matrix adhesion in breast cancer cell lines. The protein is Bone morphogenetic protein 10 (Bmp10) of Mus musculus (Mouse).